The sequence spans 219 residues: Probable GTP-binding protein EngB (219 aa).

In terms of domain architecture, EngB-type G spans Val31 to Pro205. Residues Gly39 to Ser46, Gly66 to Leu70, Asp84 to Gly87, Thr151 to Asp154, and Phe184 to Ala186 each bind GTP. The Mg(2+) site is built by Ser46 and Thr68.

This sequence belongs to the TRAFAC class TrmE-Era-EngA-EngB-Septin-like GTPase superfamily. EngB GTPase family. Mg(2+) serves as cofactor.

In terms of biological role, necessary for normal cell division and for the maintenance of normal septation. The sequence is that of Probable GTP-binding protein EngB from Shewanella putrefaciens (strain CN-32 / ATCC BAA-453).